A 163-amino-acid polypeptide reads, in one-letter code: Shikimate kinase (163 aa).

Glycine 10 to serine 15 is an ATP binding site. Residue serine 14 coordinates Mg(2+). Substrate-binding residues include aspartate 28, arginine 52, and glycine 75. Position 116 (arginine 116) interacts with ATP. Arginine 134 contributes to the substrate binding site. Residue arginine 151 coordinates ATP.

This sequence belongs to the shikimate kinase family. In terms of assembly, monomer. Mg(2+) is required as a cofactor.

It is found in the cytoplasm. The enzyme catalyses shikimate + ATP = 3-phosphoshikimate + ADP + H(+). Its pathway is metabolic intermediate biosynthesis; chorismate biosynthesis; chorismate from D-erythrose 4-phosphate and phosphoenolpyruvate: step 5/7. Its function is as follows. Catalyzes the specific phosphorylation of the 3-hydroxyl group of shikimic acid using ATP as a cosubstrate. This chain is Shikimate kinase, found in Streptococcus thermophilus (strain ATCC BAA-491 / LMD-9).